A 394-amino-acid chain; its full sequence is MNKKSIRDVDLKGKRVFCRVDFNVPMKEGKITDETRIRAALPTIQYLVEQGAKVILASHLGRPKGQAVEELRLTPVAARLGELLGKDVKKADEAFGPVAQEMVAAMNEGDVLVLENVRFYAGEEKNDAELAKEFAALADIFVNDAFGAAHRAHASTAGIADYLPAVSGLLMEKELDVLGKALSNPERPFTAIIGGAKVKDKIGVIRHLLDKVDNLIIGGGLAYTFVKALGHEIGLSLCEDDKIELAKEFMQLAKEKGVNFYMPVDVVITEEFSETATTQIVGIDSIPSNWEGVDIGPKTREIYADVIKNSKLVVWNGPMGVFEMTPFAEGTKAVGQALADAEDTYSVIGGGDSAAAVEKFGMADKMSHISTGGGASLEFMEGKELPGVVCLNDK.

Residues 21-23, arginine 36, 59-62, arginine 118, and arginine 151 each bind substrate; these read DFN and HLGR. Serine 183 carries the post-translational modification Phosphoserine. Residues lysine 201 and glycine 292 each coordinate ATP. Position 299 is a phosphothreonine (threonine 299). Residues glutamate 323 and 350 to 353 each bind ATP; that span reads GGDS.

The protein belongs to the phosphoglycerate kinase family. Monomer.

It is found in the cytoplasm. The enzyme catalyses (2R)-3-phosphoglycerate + ATP = (2R)-3-phospho-glyceroyl phosphate + ADP. Its pathway is carbohydrate degradation; glycolysis; pyruvate from D-glyceraldehyde 3-phosphate: step 2/5. This is Phosphoglycerate kinase from Bacillus cereus (strain G9842).